The primary structure comprises 122 residues: Flagellar protein FliT (122 aa).

The interval 1–50 (MTSTVEFINRWQRIALLSQSLLELAQRGEWDLLLQQEVSYLQSIETVMEK) is required for homodimerization. Residues 60 to 98 (IQDMVAGYIKQTLDNEQLLKGLLQQRLDELSSLIGQSTR) form a fliD binding region.

Belongs to the FliT family. As to quaternary structure, homodimer. Interacts with FliD and FlhC.

The protein resides in the cytoplasm. It localises to the cytosol. Functionally, dual-function protein that regulates the transcription of class 2 flagellar operons and that also acts as an export chaperone for the filament-capping protein FliD. As a transcriptional regulator, acts as an anti-FlhDC factor; it directly binds FlhC, thus inhibiting the binding of the FlhC/FlhD complex to class 2 promoters, resulting in decreased expression of class 2 flagellar operons. As a chaperone, effects FliD transition to the membrane by preventing its premature polymerization, and by directing it to the export apparatus. This is Flagellar protein FliT from Salmonella gallinarum (strain 287/91 / NCTC 13346).